A 180-amino-acid polypeptide reads, in one-letter code: MKVLAITGYKPFELGIFKQDDKALYYIKKAIKNRLIAFLDEGLEWILISGQLGVELWAAEAAYDLQEEYPDLKVAVITPFYEQEKNWKEPNKEQYEAVLAQADYEASLTHRPYESPLQFKQKNQFFIDKSDGLLLLYDPEKEGSPKYMLGTAEKRREQDGYPIYFITMDDLRVTVEEDSY.

It belongs to the UPF0398 family.

The protein is UPF0398 protein YpsA (ypsA) of Bacillus subtilis (strain 168).